A 381-amino-acid polypeptide reads, in one-letter code: Neuropeptide Y receptor type 2 (381 aa).

The tract at residues 1 to 35 is disordered; the sequence is MGPIGTEADENQTVEEMKVEQYGPQTTPRGELVPD. The Extracellular segment spans residues 1 to 51; sequence MGPIGTEADENQTVEEMKVEQYGPQTTPRGELVPDPEPELIDSTKLIEVQV. Residue Asn11 is glycosylated (N-linked (GlcNAc...) asparagine). The helical transmembrane segment at 52-72 threads the bilayer; sequence VLILAYCSIILLGVIGNSLVI. The Cytoplasmic portion of the chain corresponds to 73-86; that stretch reads HVVIKFKSMRTVTN. The helical transmembrane segment at 87-107 threads the bilayer; that stretch reads FFIANLAVADLVVNTLCLPFT. Topologically, residues 108–124 are extracellular; that stretch reads LTYTLMGEWKMGPVLCH. An intrachain disulfide couples Cys123 to Cys203. The helical transmembrane segment at 125-145 threads the bilayer; it reads LVPYAQGLAVQVSTITLTVIA. The Cytoplasmic portion of the chain corresponds to 146–165; sequence LDRHRCIVYHLESKISKRIS. A helical membrane pass occupies residues 166 to 186; that stretch reads FLIIGLAWGISALLASPLAIF. Over 187–216 the chain is Extracellular; sequence REYSLIEIIPDFEIVACTEKWPGEEKSIYG. Residues 217-237 form a helical membrane-spanning segment; it reads TVYSLSSLLILYVLPLGIISF. The Cytoplasmic segment spans residues 238-268; it reads SYTRIWSKLKSHVSPGAANDHYHQRRQKTTK. Residues 269-289 traverse the membrane as a helical segment; it reads MLVCVVVVFAVSWLPLHAFQL. Over 290-304 the chain is Extracellular; the sequence is AVDIDSHVLDLKEYK. Residues 305–325 form a helical membrane-spanning segment; the sequence is LIFTVFHIIAMCSTFANPLLY. Topologically, residues 326–381 are cytoplasmic; it reads GWMNSNYRKAFLSAFRCEQRLDAIHSEVSVTFKAKKNLEVRKNSGPNDSFTEATNV. Cys342 is lipidated: S-palmitoyl cysteine.

This sequence belongs to the G-protein coupled receptor 1 family.

Its subcellular location is the cell membrane. Its function is as follows. Receptor for neuropeptide Y and peptide YY. The sequence is that of Neuropeptide Y receptor type 2 (NPY2R) from Macaca mulatta (Rhesus macaque).